A 135-amino-acid chain; its full sequence is Immunity protein RhsIA (135 aa).

The disordered stretch occupies residues 58–77 (RKQGRQISLSCGEPPEYSPD).

In terms of biological role, immunity component of a toxin-immunity protein module, which functions as a cellular contact-dependent growth inhibition (CDI) system. Specifically inhibits its cognate toxin RhsA. Cell contact is necessary for growth inhibition. The polypeptide is Immunity protein RhsIA (rhsIA) (Dickeya dadantii (strain 3937) (Erwinia chrysanthemi (strain 3937))).